We begin with the raw amino-acid sequence, 2194 residues long: Supervillin (2194 aa).

An interaction with MYLK region spans residues 1–174 (MKRKERIARR…SSYSRTELSG (174 aa)). Disordered regions lie at residues 35 to 98 (LEED…TQSL), 118 to 335 (EKYG…QRRH), 388 to 414 (PESI…KVLE), 450 to 500 (EDRG…TERM), 513 to 563 (AVSQ…QTSK), 589 to 667 (RASR…KVDE), 685 to 719 (KSFD…QPVT), and 739 to 791 (HPVM…DSST). Position 50 is a phosphoserine (serine 50). Over residues 87–98 (PYSSGIMDTQSL) the composition is skewed to polar residues. 2 stretches are compositionally biased toward basic and acidic residues: residues 139 to 161 (SRKD…ESSR) and 181 to 192 (ESKDYGLHRSDG). 2 positions are modified to phosphoserine: serine 245 and serine 262. 2 stretches are compositionally biased toward basic and acidic residues: residues 283–294 (PKHEWFLQKDSE) and 308–319 (KVREKLVREESA). A compositionally biased stretch (polar residues) spans 320-330 (RSSPELTSESL). A phosphoserine mark is found at serine 321 and serine 322. Residues 455–467 (GRSQEAPSGTEDL) show a composition bias toward polar residues. The span at 540-551 (PPQLQALKAKAP) shows a compositional bias: low complexity. Composition is skewed to basic and acidic residues over residues 592–615 (RKPE…ERGS) and 626–635 (ENRKTSERFR). Serine 652 and serine 686 each carry phosphoserine. Over residues 704–714 (QRLRRLQDRSH) the composition is skewed to basic and acidic residues. Phosphoserine is present on residues serine 747 and serine 781. A compositionally biased stretch (basic and acidic residues) spans 770-782 (LARDQTNESKDSA). Position 829 is a phosphotyrosine (tyrosine 829). Threonine 831 carries the phosphothreonine modification. Phosphoserine is present on residues serine 893, serine 899, serine 903, serine 947, serine 979, and serine 1031. The segment at 1036 to 1077 (EFGEPTSEQTGAAAGKPAAPTATPVSWKPQDPSEQPQEKRYQ) is disordered. Residues 1045 to 1059 (TGAAAGKPAAPTATP) are compositionally biased toward low complexity. Phosphoserine occurs at positions 1099 and 1205. Threonine 1210 is modified (phosphothreonine). Phosphoserine occurs at positions 1214, 1302, and 1385. Residues 1399 to 1667 (SNVSLRSVNL…KFLDWTELKR (269 aa)) form an interaction with NEB region. 5 Gelsolin-like repeats span residues 1421–1520 (KKLM…LGGQ), 1540–1662 (IETN…FLDW), 1732–1842 (ISVD…FQGG), 1861–1962 (WRLY…LGRR), and 1995–2102 (ATEF…FPSW). The region spanning 2131 to 2194 (KLCKTIYPLA…VNLKKAKGLF (64 aa)) is the HP domain.

The protein belongs to the villin/gelsolin family. As to quaternary structure, associates with F-actin. Interacts with NEB. Interacts with MYH9. Interacts with MYLK. Interacts with TASOR. In terms of assembly, interacts with TRIP6 and DYNLT1. Interacts with KIF14; at midbody during cytokinesis.

It is found in the cell membrane. The protein resides in the cytoplasm. The protein localises to the cytoskeleton. It localises to the cell projection. Its subcellular location is the invadopodium. It is found in the podosome. The protein resides in the midbody. The protein localises to the cleavage furrow. Functionally, forms a high-affinity link between the actin cytoskeleton and the membrane. Is among the first costameric proteins to assemble during myogenesis and it contributes to myogenic membrane structure and differentiation. Appears to be involved in myosin II assembly. May modulate myosin II regulation through MLCK during cell spreading, an initial step in cell migration. May play a role in invadopodial function. May be involved in modulation of focal adhesions. Supervillin-mediated down-regulation of focal adhesions involves binding to TRIP6. Plays a role in cytokinesis through KIF14 interaction. The sequence is that of Supervillin from Bos taurus (Bovine).